A 178-amino-acid chain; its full sequence is Adenine phosphoribosyltransferase (178 aa).

This sequence belongs to the purine/pyrimidine phosphoribosyltransferase family. In terms of assembly, homodimer.

It localises to the cytoplasm. It catalyses the reaction AMP + diphosphate = 5-phospho-alpha-D-ribose 1-diphosphate + adenine. It functions in the pathway purine metabolism; AMP biosynthesis via salvage pathway; AMP from adenine: step 1/1. In terms of biological role, catalyzes a salvage reaction resulting in the formation of AMP, that is energically less costly than de novo synthesis. The chain is Adenine phosphoribosyltransferase from Erythrobacter litoralis (strain HTCC2594).